The following is a 121-amino-acid chain: Nitrogen fixation nifHD region glnB-like protein 2 (121 aa).

Belongs to the P(II) protein family.

Functionally, could be involved in the regulation of nitrogen fixation. This Methanococcus maripaludis (Methanococcus deltae) protein is Nitrogen fixation nifHD region glnB-like protein 2 (glnBII).